The primary structure comprises 515 residues: 1-pyrroline-5-carboxylate dehydrogenase (515 aa).

Residues Glu-286 and Cys-320 contribute to the active site.

Belongs to the aldehyde dehydrogenase family. RocA subfamily.

The enzyme catalyses L-glutamate 5-semialdehyde + NAD(+) + H2O = L-glutamate + NADH + 2 H(+). Its pathway is amino-acid degradation; L-proline degradation into L-glutamate; L-glutamate from L-proline: step 2/2. This chain is 1-pyrroline-5-carboxylate dehydrogenase, found in Geobacillus sp. (strain WCH70).